The following is a 417-amino-acid chain: Lysosome-associated membrane glycoprotein 1 (417 aa).

The first 28 residues, 1 to 28, serve as a signal peptide directing secretion; the sequence is MAAPGSARRPLLLLLLLLLLGLMHCASA. A first lumenal domain region spans residues 29 to 194; the sequence is AMFMVKNGNG…SRGETRCEQD (166 aa). The Lumenal segment spans residues 29-382; the sequence is AMFMVKNGNG…EECLLDENSM (354 aa). N-linked (GlcNAc...) asparagine glycans are attached at residues N37 and N45. C41 and C80 are joined by a disulfide. A glycan (N-linked (GlcNAc...) (polylactosaminoglycan) asparagine) is linked at N62. Residues N76, N84, N103, and N107 are each glycosylated (N-linked (GlcNAc...) asparagine). N-linked (GlcNAc...) (polylactosaminoglycan) asparagine glycosylation is found at N121 and N130. Cysteines 155 and 191 form a disulfide. N165 and N181 each carry an N-linked (GlcNAc...) asparagine glycan. The interval 184 to 221 is disordered; it reads FSRGETRCEQDRPSPTTAPPAPPSPSPSPVPKSPSVDK. The segment at 195–227 is hinge; that stretch reads RPSPTTAPPAPPSPSPSPVPKSPSVDKYNVSGT. O-linked (GalNAc...) serine; partial glycosylation is present at S197. T199 and T200 each carry an O-linked (GalNAc...) threonine glycan. Positions 199–215 are enriched in pro residues; the sequence is TTAPPAPPSPSPSPVPK. O-linked (GalNAc...) serine glycosylation is found at S207, S209, and S211. 2 N-linked (GlcNAc...) (polylactosaminoglycan) asparagine glycosylation sites follow: N223 and N228. The tract at residues 228 to 382 is second lumenal domain; it reads NGTCLLASMG…EECLLDENSM (155 aa). A disulfide bridge connects residues C231 and C269. Residues N241, N249, N261, N293, and N322 are each glycosylated (N-linked (GlcNAc...) asparagine). Cysteines 338 and 375 form a disulfide. Residues 383–410 traverse the membrane as a helical segment; sequence LIPIAVGGALAGLVLIVLIAYLVGRKRS. The Cytoplasmic segment spans residues 411-417; that stretch reads HAGYQTI.

It belongs to the LAMP family. As to quaternary structure, interacts with ABCB9; this interaction strongly stabilizes ABCB9 and protects ABCB9 against lysosomal degradation. Interacts with FURIN. Interacts with TMEM175; inhibiting the proton channel activity of TMEM175. (Microbial infection) Interacts with Lassa virus protein glycoprotein. In terms of assembly, (Microbial infection) Interacts with mumps virus protein F; this interaction promotes protein F cleavage by FURIN. Post-translationally, O- and N-glycosylated; some of the 18 N-linked glycans are polylactosaminoglycans. In terms of processing, (Microbial infection) The glycosylation of Asn-76 is essential for Lassa virus entry into cells.

It is found in the lysosome membrane. It localises to the endosome membrane. The protein localises to the late endosome membrane. Its subcellular location is the cell membrane. The protein resides in the cytolytic granule membrane. In terms of biological role, lysosomal membrane glycoprotein which plays an important role in lysosome biogenesis, lysosomal pH regulation, autophagy and cholesterol homeostasis. Acts as an important regulator of lysosomal lumen pH regulation by acting as a direct inhibitor of the proton channel TMEM175, facilitating lysosomal acidification for optimal hydrolase activity. Also plays an important role in NK-cells cytotoxicity. Mechanistically, participates in cytotoxic granule movement to the cell surface and perforin trafficking to the lytic granule. In addition, protects NK-cells from degranulation-associated damage induced by their own cytotoxic granule content. Presents carbohydrate ligands to selectins. Its function is as follows. (Microbial infection) Acts as a receptor for Lassa virus glycoprotein. Also promotes fusion of the virus with host membrane in less acidic endosomes. (Microbial infection) Supports the FURIN-mediated cleavage of mumps virus fusion protein F by interacting with both FURIN and the unprocessed form but not the processed form of the viral protein F. This chain is Lysosome-associated membrane glycoprotein 1, found in Homo sapiens (Human).